The sequence spans 460 residues: Exodeoxyribonuclease 7 large subunit (460 aa).

It belongs to the XseA family. In terms of assembly, heterooligomer composed of large and small subunits.

Its subcellular location is the cytoplasm. The enzyme catalyses Exonucleolytic cleavage in either 5'- to 3'- or 3'- to 5'-direction to yield nucleoside 5'-phosphates.. Bidirectionally degrades single-stranded DNA into large acid-insoluble oligonucleotides, which are then degraded further into small acid-soluble oligonucleotides. The protein is Exodeoxyribonuclease 7 large subunit of Edwardsiella ictaluri (strain 93-146).